A 354-amino-acid polypeptide reads, in one-letter code: NADH-quinone oxidoreductase subunit H (354 aa).

8 helical membrane passes run 25–45 (LVRI…LILW), 91–111 (WLYL…WAVI), 126–146 (LLYA…AGWA), 170–190 (MGFA…SEIV), 205–225 (FLSW…ISGI), 253–273 (MAFA…SALA), 290–310 (FIPG…VFIW), and 330–350 (VFLP…MSPL).

This sequence belongs to the complex I subunit 1 family. NDH-1 is composed of 14 different subunits. Subunits NuoA, H, J, K, L, M, N constitute the membrane sector of the complex.

The protein localises to the cell inner membrane. The enzyme catalyses a quinone + NADH + 5 H(+)(in) = a quinol + NAD(+) + 4 H(+)(out). Its function is as follows. NDH-1 shuttles electrons from NADH, via FMN and iron-sulfur (Fe-S) centers, to quinones in the respiratory chain. The immediate electron acceptor for the enzyme in this species is believed to be ubiquinone. Couples the redox reaction to proton translocation (for every two electrons transferred, four hydrogen ions are translocated across the cytoplasmic membrane), and thus conserves the redox energy in a proton gradient. This subunit may bind ubiquinone. The sequence is that of NADH-quinone oxidoreductase subunit H from Burkholderia thailandensis (strain ATCC 700388 / DSM 13276 / CCUG 48851 / CIP 106301 / E264).